Consider the following 65-residue polypeptide: Sarcoplasmic/endoplasmic reticulum calcium ATPase regulator ARLN (65 aa).

N-acetylmethionine is present on Met1. Residues 1 to 36 (MEVSQAASGTDGVRERRGSFEAGRRNQDEAPQSGMN) form a disordered region. Residues 12-28 (GVRERRGSFEAGRRNQD) are compositionally biased toward basic and acidic residues. Ser19 bears the Phosphoserine mark. A helical transmembrane segment spans residues 44–64 (WLDLWLFILFDLALFVFVYLL).

In terms of assembly, homooligomer. Can also form heterooligomers with other sarcoplasmic/endoplasmic reticulum calcium ATPase (SERCA) regulators ERLN, PLN, SLN and STRIT1/DWORF. Monomer. Interacts as a monomer with ATP2A2/SERCA2; the interaction results in inhibition of ATP2A2 Ca(2+) affinity. In terms of tissue distribution, in the embryo, expressed in heart, epidermal epithelium, salivary gland, brown fat, intestinal epithelium and bladder urothelium.

The protein resides in the endoplasmic reticulum membrane. In terms of biological role, inhibits the activity of the calcium ATPases ATP2A2/SERCA2 and ATP2A3/SERCA3 by decreasing their apparent affinity for Ca(2+). The sequence is that of Sarcoplasmic/endoplasmic reticulum calcium ATPase regulator ARLN (Arln) from Mus musculus (Mouse).